The following is an 83-amino-acid chain: Sulfur carrier protein TusA (83 aa).

The active-site Cysteine persulfide intermediate is the cysteine 20.

This sequence belongs to the sulfur carrier protein TusA family.

The protein resides in the cytoplasm. In terms of biological role, sulfur carrier protein which probably makes part of a sulfur-relay system. The protein is Sulfur carrier protein TusA of Pseudomonas fluorescens (strain SBW25).